The primary structure comprises 161 residues: Nucleotide-binding protein PBPRA2024 (161 aa).

Belongs to the YajQ family.

Functionally, nucleotide-binding protein. This Photobacterium profundum (strain SS9) protein is Nucleotide-binding protein PBPRA2024.